A 167-amino-acid polypeptide reads, in one-letter code: Small ribosomal subunit protein uS5 (167 aa).

Positions 12–75 (LQEKLVQVNR…EAARRNMIQV (64 aa)) constitute an S5 DRBM domain.

It belongs to the universal ribosomal protein uS5 family. In terms of assembly, part of the 30S ribosomal subunit. Contacts proteins S4 and S8.

Functionally, with S4 and S12 plays an important role in translational accuracy. In terms of biological role, located at the back of the 30S subunit body where it stabilizes the conformation of the head with respect to the body. This is Small ribosomal subunit protein uS5 from Alcanivorax borkumensis (strain ATCC 700651 / DSM 11573 / NCIMB 13689 / SK2).